The primary structure comprises 435 residues: Eukaryotic peptide chain release factor subunit 1 (435 aa).

Belongs to the eukaryotic release factor 1 family. In terms of assembly, heterodimer of two subunits, one of which binds GTP.

Its subcellular location is the cytoplasm. Its function is as follows. Directs the termination of nascent peptide synthesis (translation) in response to the termination codons UAA, UAG and UGA. The sequence is that of Eukaryotic peptide chain release factor subunit 1 (SU2) from Podospora anserina (Pleurage anserina).